A 486-amino-acid polypeptide reads, in one-letter code: Malonate-semialdehyde dehydrogenase (486 aa).

5 residues coordinate NAD(+): phenylalanine 154, lysine 178, glutamate 181, arginine 182, and serine 231. The Nucleophile role is filled by cysteine 286. Glutamate 386 contacts NAD(+).

The protein belongs to the aldehyde dehydrogenase family. IolA subfamily. Homotetramer.

The enzyme catalyses 3-oxopropanoate + NAD(+) + CoA + H2O = hydrogencarbonate + acetyl-CoA + NADH + H(+). It carries out the reaction 2-methyl-3-oxopropanoate + NAD(+) + CoA + H2O = propanoyl-CoA + hydrogencarbonate + NADH + H(+). The protein operates within polyol metabolism; myo-inositol degradation into acetyl-CoA; acetyl-CoA from myo-inositol: step 7/7. In terms of biological role, catalyzes the oxidation of malonate semialdehyde (MSA) and methylmalonate semialdehyde (MMSA) into acetyl-CoA and propanoyl-CoA, respectively. Is involved in a myo-inositol catabolic pathway. Bicarbonate, and not CO2, is the end-product of the enzymatic reaction. The chain is Malonate-semialdehyde dehydrogenase from Bacillus cereus (strain ATCC 14579 / DSM 31 / CCUG 7414 / JCM 2152 / NBRC 15305 / NCIMB 9373 / NCTC 2599 / NRRL B-3711).